Here is a 215-residue protein sequence, read N- to C-terminus: uncharacterized protein (215 aa).

This sequence belongs to the thiaminase-2 family.

This is an uncharacterized protein from Haemophilus influenzae (strain ATCC 51907 / DSM 11121 / KW20 / Rd).